The sequence spans 255 residues: Cytochrome c oxidase subunit 2 (255 aa).

The Mitochondrial intermembrane segment spans residues 1 to 42 (MKFFFFSFINYKVLNDAARPWQIGFQDPATPIMEGIVNLHHD). A helical membrane pass occupies residues 43-63 (IIFFLIIIIIFVSWILFRTLF). Topologically, residues 64 to 83 (LFNSKTNPVAYNFSHGTFIE) are mitochondrial matrix. The helical transmembrane segment at 84–104 (LLWTLTPSLVLIGIAVPSFAL) threads the bilayer. The Mitochondrial intermembrane segment spans residues 105–255 (LYSIDEIIDP…IRWVQNKILD (151 aa)). 6 residues coordinate Cu cation: H187, C222, E224, C226, H230, and M233. E224 provides a ligand contact to Mg(2+).

The protein belongs to the cytochrome c oxidase subunit 2 family. Component of the cytochrome c oxidase (complex IV, CIV), a multisubunit enzyme composed of a catalytic core of 3 subunits and several supernumerary subunits. The complex exists as a monomer or a dimer and forms supercomplexes (SCs) in the inner mitochondrial membrane with ubiquinol-cytochrome c oxidoreductase (cytochrome b-c1 complex, complex III, CIII). The cofactor is Cu cation.

It localises to the mitochondrion inner membrane. The enzyme catalyses 4 Fe(II)-[cytochrome c] + O2 + 8 H(+)(in) = 4 Fe(III)-[cytochrome c] + 2 H2O + 4 H(+)(out). Component of the cytochrome c oxidase, the last enzyme in the mitochondrial electron transport chain which drives oxidative phosphorylation. The respiratory chain contains 3 multisubunit complexes succinate dehydrogenase (complex II, CII), ubiquinol-cytochrome c oxidoreductase (cytochrome b-c1 complex, complex III, CIII) and cytochrome c oxidase (complex IV, CIV), that cooperate to transfer electrons derived from NADH and succinate to molecular oxygen, creating an electrochemical gradient over the inner membrane that drives transmembrane transport and the ATP synthase. Cytochrome c oxidase is the component of the respiratory chain that catalyzes the reduction of oxygen to water. Electrons originating from reduced cytochrome c in the intermembrane space (IMS) are transferred via the dinuclear copper A center (CU(A)) of subunit 2 and heme A of subunit 1 to the active site in subunit 1, a binuclear center (BNC) formed by heme A3 and copper B (CU(B)). The BNC reduces molecular oxygen to 2 water molecules using 4 electrons from cytochrome c in the IMS and 4 protons from the mitochondrial matrix. This chain is Cytochrome c oxidase subunit 2 (COX2), found in Cyanidium caldarium (Red alga).